The sequence spans 327 residues: Arabinose 5-phosphate isomerase KdsD (327 aa).

In terms of domain architecture, SIS spans 41–183; the sequence is ILENNRDKSR…AIALLKAKNF (143 aa). Residues 74–75, H81, H87, 113–122, 147–149, T221, and E273 each bind substrate; these read GT, GLLPMIKHLD, and HVD. H81 is a binding site for Zn(2+). The region spanning 209–268 is the CBS 1 domain; that stretch reads MRKGNEIPIVKPTDNIRKAILEISDKGVGNTLVAENNTLLGIFTDGDLRRMFEAESFNSQ. One can recognise a CBS 2 domain in the interval 275–327; the sequence is MTKNPKSISKEEMAITALEKMEKYEITSLAVVDNGHNILGIVTMHDLIKLELR.

The protein belongs to the SIS family. GutQ/KpsF subfamily. Homotetramer.

It carries out the reaction D-arabinose 5-phosphate = D-ribulose 5-phosphate. It participates in carbohydrate biosynthesis; 3-deoxy-D-manno-octulosonate biosynthesis; 3-deoxy-D-manno-octulosonate from D-ribulose 5-phosphate: step 1/3. Its pathway is bacterial outer membrane biogenesis; lipopolysaccharide biosynthesis. Its activity is regulated as follows. Inhibited by hydroxamates, mimicking the putative enediol reaction intermediate. Most potent inhibition, with an IC(50) of 0.7 uM, is obtained with the 4 carbon-based hydroxamate containing acetyl moieties. Functionally, involved in the biosynthesis of 3-deoxy-D-manno-octulosonate (KDO), a unique 8-carbon sugar component of lipopolysaccharides (LPSs). Catalyzes the reversible aldol-ketol isomerization between D-ribulose 5-phosphate (Ru5P) and D-arabinose 5-phosphate (A5P). The protein is Arabinose 5-phosphate isomerase KdsD (kdsD) of Francisella tularensis subsp. tularensis (strain SCHU S4 / Schu 4).